Consider the following 231-residue polypeptide: Uracil phosphoribosyltransferase (231 aa).

38–42 (KGLVR) is a binding site for GTP. 5-phospho-alpha-D-ribose 1-diphosphate-binding positions include Arg87, Arg112, and 140–148 (DPMIATGST). Uracil-binding positions include Ile203 and 208-210 (GDA). Asp209 contributes to the 5-phospho-alpha-D-ribose 1-diphosphate binding site.

The protein belongs to the UPRTase family. The cofactor is Mg(2+).

It carries out the reaction UMP + diphosphate = 5-phospho-alpha-D-ribose 1-diphosphate + uracil. The protein operates within pyrimidine metabolism; UMP biosynthesis via salvage pathway; UMP from uracil: step 1/1. Its activity is regulated as follows. Allosterically activated by GTP. Functionally, catalyzes the conversion of uracil and 5-phospho-alpha-D-ribose 1-diphosphate (PRPP) to UMP and diphosphate. The polypeptide is Uracil phosphoribosyltransferase (Methanococcus maripaludis (strain C5 / ATCC BAA-1333)).